An 850-amino-acid polypeptide reads, in one-letter code: Bifunctional uridylyltransferase/uridylyl-removing enzyme (850 aa).

The segment at 1 to 317 (MSARPFADLR…LFPVVAPPLP (317 aa)) is uridylyltransferase. The uridylyl-removing stretch occupies residues 318 to 673 (IDDDFQLRAG…ARLSPAGEGI (356 aa)). The HD domain occupies 436–558 (VDEHILTVLR…VGDTRRLDAL (123 aa)). 2 ACT domains span residues 674 to 755 (QVMV…AVQP) and 783 to 850 (VLSI…GVLG).

It belongs to the GlnD family. It depends on Mg(2+) as a cofactor.

The enzyme catalyses [protein-PII]-L-tyrosine + UTP = [protein-PII]-uridylyl-L-tyrosine + diphosphate. It catalyses the reaction [protein-PII]-uridylyl-L-tyrosine + H2O = [protein-PII]-L-tyrosine + UMP + H(+). Its activity is regulated as follows. Uridylyltransferase (UTase) activity is inhibited by glutamine, while glutamine activates uridylyl-removing (UR) activity. Functionally, modifies, by uridylylation and deuridylylation, the PII regulatory proteins (GlnB and homologs), in response to the nitrogen status of the cell that GlnD senses through the glutamine level. Under low glutamine levels, catalyzes the conversion of the PII proteins and UTP to PII-UMP and PPi, while under higher glutamine levels, GlnD hydrolyzes PII-UMP to PII and UMP (deuridylylation). Thus, controls uridylylation state and activity of the PII proteins, and plays an important role in the regulation of nitrogen assimilation and metabolism. In Thiobacillus denitrificans (strain ATCC 25259 / T1), this protein is Bifunctional uridylyltransferase/uridylyl-removing enzyme.